Consider the following 328-residue polypeptide: Beta-ketoacyl-[acyl-carrier-protein] synthase III (328 aa).

Catalysis depends on residues Cys-122 and His-255. The interval 256-260 is ACP-binding; it reads QANIR. Asn-285 is an active-site residue.

This sequence belongs to the thiolase-like superfamily. FabH family. In terms of assembly, homodimer.

It localises to the cytoplasm. It carries out the reaction malonyl-[ACP] + acetyl-CoA + H(+) = 3-oxobutanoyl-[ACP] + CO2 + CoA. The protein operates within lipid metabolism; fatty acid biosynthesis. Catalyzes the condensation reaction of fatty acid synthesis by the addition to an acyl acceptor of two carbons from malonyl-ACP. Catalyzes the first condensation reaction which initiates fatty acid synthesis and may therefore play a role in governing the total rate of fatty acid production. Possesses both acetoacetyl-ACP synthase and acetyl transacylase activities. Its substrate specificity determines the biosynthesis of branched-chain and/or straight-chain of fatty acids. This Janthinobacterium sp. (strain Marseille) (Minibacterium massiliensis) protein is Beta-ketoacyl-[acyl-carrier-protein] synthase III.